A 198-amino-acid polypeptide reads, in one-letter code: MASKKMEALGSVVAEALGDKLVRSTLALDELTIVCKASDLLSVAQTLRDHADLAFEQCIDVCGMDYSAYRDEPWDGPRFAAVYHLLSVKLNHRIRLRVFAEDDDFPVIPSVNGIWNAANWFEREAFDLYGIVFEGHPDLRRLLTDYGFVGHPFRKDFPLSGYVEMRYDPTQQRVIYQPVTIEPREITPRIIREENYGG.

Belongs to the complex I 30 kDa subunit family. As to quaternary structure, NDH-1 is composed of 14 different subunits. Subunits NuoB, C, D, E, F, and G constitute the peripheral sector of the complex.

It localises to the cell inner membrane. It catalyses the reaction a quinone + NADH + 5 H(+)(in) = a quinol + NAD(+) + 4 H(+)(out). NDH-1 shuttles electrons from NADH, via FMN and iron-sulfur (Fe-S) centers, to quinones in the respiratory chain. The immediate electron acceptor for the enzyme in this species is believed to be ubiquinone. Couples the redox reaction to proton translocation (for every two electrons transferred, four hydrogen ions are translocated across the cytoplasmic membrane), and thus conserves the redox energy in a proton gradient. The sequence is that of NADH-quinone oxidoreductase subunit C from Chromobacterium violaceum (strain ATCC 12472 / DSM 30191 / JCM 1249 / CCUG 213 / NBRC 12614 / NCIMB 9131 / NCTC 9757 / MK).